Reading from the N-terminus, the 363-residue chain is 1,2-Dihydrovomilenine reductase (363 aa).

Residues 24-352 (GILSPFKFSR…KGDVRYRFVI (329 aa)) enclose the Enoyl reductase (ER) domain. Cys-51 is a Zn(2+) binding site. Ser-53 contributes to the NADP(+) binding site. Zn(2+) is bound by residues Asp-54, Glu-74, Cys-104, Cys-107, Cys-110, and Cys-118. NADP(+) contacts are provided by Leu-193, Gly-195, Leu-196, Ser-215, Thr-216, Ser-217, Lys-220, Lys-221, Val-278, Ala-280, Thr-302, and Arg-349.

It belongs to the zinc-containing alcohol dehydrogenase family. Class-P subfamily. Homodimer. Requires Zn(2+) as cofactor. Mainly expressed in mature roots and, to a lower extent, in stems and leaves.

It is found in the cytoplasm. It carries out the reaction 17-O-acetylnorajmaline + NADP(+) = (2R)-1,2-dihydrovomilenine + NADPH + 2 H(+). The enzyme catalyses (20S)-19,20-dihydrovomilenine + NADP(+) = vomilenine + NADPH + H(+). It functions in the pathway alkaloid biosynthesis; ajmaline biosynthesis. Functionally, alcohol dehydrogenase involved in the biosynthesis of ajmaline-type monoterpenoid indole alkaloids (MIAs) natural products, important plant-derived pharmaceuticals used in the therapy of heart disorders. Catalyzes the conversion of 1,2-dihydrovomilenine to 17-O-acetylnorajmaline, an intermediate chemical in the biosynthesis of ajmaline. Also able, with a lower efficiency, to convert vomilenine into 19,20-dihydrovomilenine. The polypeptide is 1,2-Dihydrovomilenine reductase (Rauvolfia serpentina (Serpentine wood)).